A 266-amino-acid polypeptide reads, in one-letter code: Undecaprenyl-diphosphatase (266 aa).

8 helical membrane passes run 1-21 (MTLT…FLPI), 39-59 (QGLA…MIYF), 87-107 (WWVI…KAFI), 111-131 (ARSA…LWYA), 150-172 (LIVG…ITMT), 187-207 (FSFL…TLDL), 218-238 (ALIV…YLFL), and 244-264 (IGML…LLFV).

It belongs to the UppP family.

Its subcellular location is the cell inner membrane. The enzyme catalyses di-trans,octa-cis-undecaprenyl diphosphate + H2O = di-trans,octa-cis-undecaprenyl phosphate + phosphate + H(+). Its function is as follows. Catalyzes the dephosphorylation of undecaprenyl diphosphate (UPP). Confers resistance to bacitracin. The sequence is that of Undecaprenyl-diphosphatase from Pseudoalteromonas atlantica (strain T6c / ATCC BAA-1087).